A 327-amino-acid chain; its full sequence is GTPase Obg (327 aa).

An Obg domain is found at 2–160; that stretch reads HTFKDSLNIT…LDLRLELVLI (159 aa). The region spanning 161–326 is the OBG-type G domain; sequence ADIGLVGLPN…LVNELFALSR (166 aa). Residues 167–174, 192–196, 213–216, 280–283, and 307–309 contribute to the GTP site; these read GLPNAGKS, FTTKV, DVPG, NKLD, and SIY. Mg(2+)-binding residues include Ser-174 and Thr-194.

Belongs to the TRAFAC class OBG-HflX-like GTPase superfamily. OBG GTPase family. In terms of assembly, monomer. The cofactor is Mg(2+).

It localises to the cytoplasm. Functionally, an essential GTPase which binds GTP, GDP and possibly (p)ppGpp with moderate affinity, with high nucleotide exchange rates and a fairly low GTP hydrolysis rate. Plays a role in control of the cell cycle, stress response, ribosome biogenesis and in those bacteria that undergo differentiation, in morphogenesis control. The sequence is that of GTPase Obg from Borrelia turicatae (strain 91E135).